The sequence spans 419 residues: CinA-like protein (419 aa).

The protein belongs to the CinA family.

This is CinA-like protein from Parasynechococcus marenigrum (strain WH8102).